The sequence spans 197 residues: Small ribosomal subunit protein uS4B (197 aa).

The 63-residue stretch at 88–150 (SRLDNMVYRM…SRKTEMFVNN (63 aa)) folds into the S4 RNA-binding domain.

It belongs to the universal ribosomal protein uS4 family. As to quaternary structure, part of the 30S ribosomal subunit. Contacts protein S5. The interaction surface between S4 and S5 is involved in control of translational fidelity.

One of the primary rRNA binding proteins, it binds directly to 16S rRNA where it nucleates assembly of the body of the 30S subunit. In terms of biological role, with S5 and S12 plays an important role in translational accuracy. The chain is Small ribosomal subunit protein uS4B from Clostridium perfringens (strain ATCC 13124 / DSM 756 / JCM 1290 / NCIMB 6125 / NCTC 8237 / Type A).